We begin with the raw amino-acid sequence, 570 residues long: Fibropellin-3 (570 aa).

Positions 1-17 are cleaved as a signal peptide; that stretch reads MKVSLLAVLLLSIVAAT. Residues 18–55 form the EGF-like 1 domain; it reads YGQGECGSNPCENGSVCRDGEGTYICECQMGYDGQNCD. Cystine bridges form between Cys-23–Cys-34, Cys-28–Cys-43, Cys-45–Cys-54, and Cys-62–Cys-88. An N-linked (GlcNAc...) asparagine glycan is attached at Asn-30. The CUB domain occupies 62 to 175; the sequence is CGYNIFESTG…RKGFRITFSS (114 aa). Residue Asn-136 is glycosylated (N-linked (GlcNAc...) asparagine). The EGF-like 2; calcium-binding domain occupies 176–212; the sequence is DGDDCTPNPCLNGATCVDQVNDYQCICAPGFTGDNCE. 22 disulfides stabilise this stretch: Cys-180/Cys-191, Cys-185/Cys-200, Cys-202/Cys-211, Cys-218/Cys-229, Cys-223/Cys-238, Cys-240/Cys-249, Cys-256/Cys-267, Cys-261/Cys-276, Cys-278/Cys-287, Cys-294/Cys-305, Cys-299/Cys-314, Cys-316/Cys-325, Cys-332/Cys-343, Cys-337/Cys-352, Cys-354/Cys-363, Cys-370/Cys-381, Cys-375/Cys-390, Cys-392/Cys-401, Cys-408/Cys-419, Cys-413/Cys-428, Cys-430/Cys-439, and Cys-445/Cys-521. Residues 214–250 enclose the EGF-like 3; calcium-binding domain; it reads DIDECASAPCRNGGACVDQVNGYTCNCIPGFNGVNCE. One can recognise an EGF-like 4; calcium-binding domain in the interval 252-288; sequence NINECASIPCLNGGICVDGINQFACTCLPGYTGILCE. One can recognise an EGF-like 5; calcium-binding domain in the interval 290–326; it reads DINECASSPCQNGGSCTDAVNRYTCDCRAGFTGSNCE. The 37-residue stretch at 328–364 folds into the EGF-like 6; calcium-binding domain; the sequence is NINECASSPCLNGGSCLDGVDGYVCQCLPNYTGTHCE. A glycan (N-linked (GlcNAc...) asparagine) is linked at Asn-357. The 37-residue stretch at 366 to 402 folds into the EGF-like 7 domain; it reads SLDACASLPCQNGGVCTNVGGDYVCECLPGYTGINCE. The region spanning 404–440 is the EGF-like 8; calcium-binding domain; the sequence is DINECASLPCQNGGECINGIAMYICQCRQGYAGVNCE. The 120-residue stretch at 443–562 folds into the Avidin-like domain; that stretch reads GFCDLEGVWF…GQDKWTRYEQ (120 aa).

As to quaternary structure, homotetramer.

It localises to the secreted. It is found in the extracellular space. In terms of biological role, forms the apical lamina, a component of the extracellular matrix. The sequence is that of Fibropellin-3 (EGF3) from Strongylocentrotus purpuratus (Purple sea urchin).